The sequence spans 616 residues: MALKKAPKLFKTFFHWKLWKFSIIVFVFLVFLFLLQREVGVQDFKDEAGIEPVVGKKSHVLGLVLNAMNNIKGAKPKMQIKAPIRQTKVPGERHCLPGHYTPVELKPFLDRPLQDPNAPGASGKAFKTINLNSEEQKEKQAGEEKHCFNAFASDRISLHRDLGPDTRPPECIEQKFKRCPPLPTTSIIIVFHNEAWSTLLRTVHSVMYTSPAILLKEIILVDDASVDEYLHDKLDEYVKQFQIVKVVRQKERKGLITARLLGASVATGETLTFLDAHCECFYGWLEPLLARIAENPVAVVSPDIASIDLNTFEFSKPSPYGHSHNRGNFDWSLSFGWESLPKHENKRRKDETYPIRTPTFAGGLFSISKDYFEYIGSYDEEMEIWGGENIEMSFRVWQCGGQLEIMPCSVVGHVFRSKSPHTFPKGTQVITRNQVRLAEVWMDEYKEIFYRRNTEAAKIVKQKTFGDISKRIDLRQRLQCKNFTWYLSNVYPEAYVPDLNPLFSGYLKNIGNRMCLDVGENNHGGKPLIMYSCHGLGGNQKELCLHASKGPVQLRECTYKGQKTFAVGEEQWLHQKDQTLYNEALHMCLTGNGEHPSLASCNPSDPFQKWIFGQND.

The chain crosses the membrane as a helical; Signal-anchor for type II membrane protein span at residues 13–33 (FFHWKLWKFSIIVFVFLVFLF). Residues 182–291 (LPTTSIIIVF…YGWLEPLLAR (110 aa)) form a catalytic subdomain A region. 3 residues coordinate Mn(2+): Asp275, His277, and His413. Residues 354–416 (PIRTPTFAGG…PCSVVGHVFR (63 aa)) are catalytic subdomain B. The N-linked (GlcNAc...) asparagine glycan is linked to Asn482. Residues 512-616 (NRMCLDVGEN…FQKWIFGQND (105 aa)) enclose the Ricin B-type lectin domain. Cys515 and Cys533 form a disulfide bridge. UDP-N-acetyl-alpha-D-galactosamine is bound by residues Asp517, Glu520, His534, and Asn539. Cys588 and Cys601 are joined by a disulfide.

Belongs to the glycosyltransferase 2 family. GalNAc-T subfamily. It depends on Mn(2+) as a cofactor.

Its subcellular location is the golgi apparatus. The protein resides in the golgi stack membrane. It catalyses the reaction L-seryl-[protein] + UDP-N-acetyl-alpha-D-galactosamine = a 3-O-[N-acetyl-alpha-D-galactosaminyl]-L-seryl-[protein] + UDP + H(+). The catalysed reaction is L-threonyl-[protein] + UDP-N-acetyl-alpha-D-galactosamine = a 3-O-[N-acetyl-alpha-D-galactosaminyl]-L-threonyl-[protein] + UDP + H(+). The protein operates within protein modification; protein glycosylation. In terms of biological role, catalyzes the initial reaction in O-linked oligosaccharide biosynthesis, the transfer of an N-acetyl-D-galactosamine residue to a serine or threonine residue on the protein receptor. Glycosylates FGF23. The sequence is that of Polypeptide N-acetylgalactosaminyltransferase 3 (GALNT3) from Taeniopygia guttata (Zebra finch).